The chain runs to 320 residues: Mitochondrial thiamine pyrophosphate carrier (320 aa).

Solcar repeat units lie at residues 13-106, 116-202, and 214-309; these read NTKL…LTEL, REFS…LKHL, and NENL…FCNV. Residues 19-39 form a helical membrane-spanning segment; the sequence is AVAGSVSGLVTRALISPFDVI. Ser-51 carries the post-translational modification Phosphoserine. Helical transmembrane passes span 87 to 107, 122 to 142, 173 to 193, and 220 to 240; these read ILSI…TELV, FVCG…VDVL, VFYK…GLQF, and LLCG…LDLF. A Substrate recognition motif is present at residues 241–246; that stretch reads KKRLQV. Residues 293–313 traverse the membrane as a helical segment; sequence ALSTGFMFFWYEFFCNVFHCM.

It belongs to the mitochondrial carrier (TC 2.A.29) family.

The protein localises to the mitochondrion membrane. The catalysed reaction is thiamine phosphate(out) + thiamine diphosphate(in) = thiamine phosphate(in) + thiamine diphosphate(out). In terms of biological role, mitochondrial transporter mediating uptake of thiamine diphosphate into mitochondria. It is not clear if the antiporter activity is affected by the membrane potential or by the proton electrochemical gradient. The polypeptide is Mitochondrial thiamine pyrophosphate carrier (SLC25A19) (Macaca fascicularis (Crab-eating macaque)).